Reading from the N-terminus, the 120-residue chain is NAD(P)H-quinone oxidoreductase subunit 3 (120 aa).

3 helical membrane passes run 10–30, 64–84, and 89–109; these read FLGFLLIAAAVPVLALVTNLI, MFALVFVIFDVETVFLYPWAV, and LGLLAFIEALIFIAILVIALA.

The protein belongs to the complex I subunit 3 family. In terms of assembly, NDH-1 can be composed of about 15 different subunits; different subcomplexes with different compositions have been identified which probably have different functions.

It is found in the cellular thylakoid membrane. It catalyses the reaction a plastoquinone + NADH + (n+1) H(+)(in) = a plastoquinol + NAD(+) + n H(+)(out). It carries out the reaction a plastoquinone + NADPH + (n+1) H(+)(in) = a plastoquinol + NADP(+) + n H(+)(out). In terms of biological role, NDH-1 shuttles electrons from an unknown electron donor, via FMN and iron-sulfur (Fe-S) centers, to quinones in the respiratory and/or the photosynthetic chain. The immediate electron acceptor for the enzyme in this species is believed to be plastoquinone. Couples the redox reaction to proton translocation, and thus conserves the redox energy in a proton gradient. Cyanobacterial NDH-1 also plays a role in inorganic carbon-concentration. In Prochlorococcus marinus (strain AS9601), this protein is NAD(P)H-quinone oxidoreductase subunit 3.